Reading from the N-terminus, the 183-residue chain is UPF0200 protein MmarC6_1392 (183 aa).

Position 8–15 (glycine 8–serine 15) interacts with ATP.

It belongs to the UPF0200 family.

This is UPF0200 protein MmarC6_1392 from Methanococcus maripaludis (strain C6 / ATCC BAA-1332).